Reading from the N-terminus, the 380-residue chain is MSCPYAGNGNEHDDGAVPLSNEVGKIYGEYLMLDKLLDAQCMLSMEDKRPVHDEHLFIITHQAYELWFKQIIFEFDSIRVMLDEEVIDETKTLEIVKRLNRVVLILKLLVDQVPILETMTPLDFMDFRKYLAPASGFQSLQFRLIENKLGVLTEQRVKYNQKYSDVFGNDERALHAIRSSEDGPSLLVLVQRWLERTPGLEEEGFNFWSKFQQSVDQFLAAQVQSALLEPVEWAKNYRLMDIEKRREVYRSIFDPAVHEALVKRGDRRFSHRALQGAIMITFYRDEPRFSQPHQLLTLLMDIDSLITKWRYNHVIMVQRMIGSQQLGTGGSSGYQYLRSTLSDRYKVFLDLFNLSTFLIPREAIPPLDETIRKKLVHKSV.

Substrate is bound by residues 57–61 and Arg-128; that span reads FIITH. His-313 lines the heme pocket. Thr-328 contributes to the substrate binding site.

The protein belongs to the tryptophan 2,3-dioxygenase family. Homotetramer. Dimer of dimers. Heme is required as a cofactor.

It carries out the reaction L-tryptophan + O2 = N-formyl-L-kynurenine. The protein operates within amino-acid degradation; L-tryptophan degradation via kynurenine pathway; L-kynurenine from L-tryptophan: step 1/2. Its pathway is pigment biosynthesis; ommochrome biosynthesis. Heme-dependent dioxygenase that catalyzes the oxidative cleavage of the L-tryptophan (L-Trp) pyrrole ring and converts L-tryptophan to N-formyl-L-kynurenine. Catalyzes the oxidative cleavage of the indole moiety. The protein is Tryptophan 2,3-dioxygenase of Drosophila virilis (Fruit fly).